The following is a 229-amino-acid chain: Ribonuclease 3 (229 aa).

Positions 5-127 constitute an RNase III domain; it reads LAGLERKLGY…LIGAIYLDAD (123 aa). Position 40 (Glu-40) interacts with Mg(2+). The active site involves Asp-44. Positions 113 and 116 each coordinate Mg(2+). Residue Glu-116 is part of the active site. The region spanning 154–224 is the DRBM domain; it reads DPKTRLQEFL…AASALIALGV (71 aa).

It belongs to the ribonuclease III family. Homodimer. Requires Mg(2+) as cofactor.

Its subcellular location is the cytoplasm. The catalysed reaction is Endonucleolytic cleavage to 5'-phosphomonoester.. Digests double-stranded RNA. Involved in the processing of primary rRNA transcript to yield the immediate precursors to the large and small rRNAs (23S and 16S). Processes some mRNAs, and tRNAs when they are encoded in the rRNA operon. Processes pre-crRNA and tracrRNA of type II CRISPR loci if present in the organism. This is Ribonuclease 3 from Pseudomonas putida (strain ATCC 700007 / DSM 6899 / JCM 31910 / BCRC 17059 / LMG 24140 / F1).